The chain runs to 250 residues: 5-oxoprolinase subunit A (250 aa).

Belongs to the LamB/PxpA family. In terms of assembly, forms a complex composed of PxpA, PxpB and PxpC.

The catalysed reaction is 5-oxo-L-proline + ATP + 2 H2O = L-glutamate + ADP + phosphate + H(+). Functionally, catalyzes the cleavage of 5-oxoproline to form L-glutamate coupled to the hydrolysis of ATP to ADP and inorganic phosphate. This is 5-oxoprolinase subunit A from Chromohalobacter salexigens (strain ATCC BAA-138 / DSM 3043 / CIP 106854 / NCIMB 13768 / 1H11).